The chain runs to 146 residues: 3-hydroxyacyl-[acyl-carrier-protein] dehydratase FabZ (146 aa).

His49 is a catalytic residue.

The protein belongs to the thioester dehydratase family. FabZ subfamily.

It localises to the cytoplasm. It carries out the reaction a (3R)-hydroxyacyl-[ACP] = a (2E)-enoyl-[ACP] + H2O. In terms of biological role, involved in unsaturated fatty acids biosynthesis. Catalyzes the dehydration of short chain beta-hydroxyacyl-ACPs and long chain saturated and unsaturated beta-hydroxyacyl-ACPs. In Pseudomonas entomophila (strain L48), this protein is 3-hydroxyacyl-[acyl-carrier-protein] dehydratase FabZ.